Consider the following 345-residue polypeptide: RNA polymerase II holoenzyme cyclin-like subunit (345 aa).

Residues 53-144 (QQINRLGKRM…IGECEFYLIS (92 aa)) enclose the Cyclin N-terminal domain. The tract at residues 256–285 (GLTPQSSSGLQAMLPPQSPAGEGPAEGNKN) is disordered.

Belongs to the cyclin family. Cyclin C subfamily. In terms of assembly, component of the srb8-11 complex, a regulatory module of the Mediator complex.

The protein resides in the nucleus. Its function is as follows. Component of the srb8-11 complex. The srb8-11 complex is a regulatory module of the Mediator complex which is itself involved in regulation of basal and activated RNA polymerase II-dependent transcription. The srb8-11 complex may be involved in the transcriptional repression of a subset of genes regulated by Mediator. It may inhibit the association of the Mediator complex with RNA polymerase II to form the holoenzyme complex. The srb8-11 complex phosphorylates the C-terminal domain (CTD) of the largest subunit of RNA polymerase II. The polypeptide is RNA polymerase II holoenzyme cyclin-like subunit (ssn8) (Neurospora crassa (strain ATCC 24698 / 74-OR23-1A / CBS 708.71 / DSM 1257 / FGSC 987)).